A 207-amino-acid chain; its full sequence is uncharacterized protein (207 aa).

The protein to M.leprae ML1660.

This is an uncharacterized protein from Mycobacterium tuberculosis (strain CDC 1551 / Oshkosh).